The primary structure comprises 230 residues: Geranylgeranylglyceryl phosphate synthase (230 aa).

K13 contacts sn-glycerol 1-phosphate. The Mg(2+) site is built by D15 and T41. Sn-glycerol 1-phosphate-binding positions include 161 to 166 (YIEYSG), G191, and 211 to 212 (GN).

Belongs to the GGGP/HepGP synthase family. Group I subfamily. Mg(2+) is required as a cofactor.

It is found in the cytoplasm. The catalysed reaction is sn-glycerol 1-phosphate + (2E,6E,10E)-geranylgeranyl diphosphate = sn-3-O-(geranylgeranyl)glycerol 1-phosphate + diphosphate. It participates in membrane lipid metabolism; glycerophospholipid metabolism. Its function is as follows. Prenyltransferase that catalyzes the transfer of the geranylgeranyl moiety of geranylgeranyl diphosphate (GGPP) to the C3 hydroxyl of sn-glycerol-1-phosphate (G1P). This reaction is the first ether-bond-formation step in the biosynthesis of archaeal membrane lipids. This is Geranylgeranylglyceryl phosphate synthase from Methanoculleus marisnigri (strain ATCC 35101 / DSM 1498 / JR1).